The sequence spans 259 residues: Deoxyribose-phosphate aldolase (259 aa).

The active-site Proton donor/acceptor is D102. K167 acts as the Schiff-base intermediate with acetaldehyde in catalysis. The Proton donor/acceptor role is filled by K201.

Belongs to the DeoC/FbaB aldolase family. DeoC type 2 subfamily.

It localises to the cytoplasm. It carries out the reaction 2-deoxy-D-ribose 5-phosphate = D-glyceraldehyde 3-phosphate + acetaldehyde. It participates in carbohydrate degradation; 2-deoxy-D-ribose 1-phosphate degradation; D-glyceraldehyde 3-phosphate and acetaldehyde from 2-deoxy-alpha-D-ribose 1-phosphate: step 2/2. Its function is as follows. Catalyzes a reversible aldol reaction between acetaldehyde and D-glyceraldehyde 3-phosphate to generate 2-deoxy-D-ribose 5-phosphate. The sequence is that of Deoxyribose-phosphate aldolase from Erwinia tasmaniensis (strain DSM 17950 / CFBP 7177 / CIP 109463 / NCPPB 4357 / Et1/99).